We begin with the raw amino-acid sequence, 250 residues long: UPF0246 protein cce_3295 (250 aa).

This sequence belongs to the UPF0246 family.

The polypeptide is UPF0246 protein cce_3295 (Crocosphaera subtropica (strain ATCC 51142 / BH68) (Cyanothece sp. (strain ATCC 51142))).